Here is a 104-residue protein sequence, read N- to C-terminus: Inner membrane protein YjeO (104 aa).

Residues 1 to 5 (MSARM) lie on the Cytoplasmic side of the membrane. A helical membrane pass occupies residues 6 to 26 (FVLCCIWFIVAFLWITITSAL). Topologically, residues 27-52 (DKEWMIDGRGINNVCDVLMYLEEDDT) are periplasmic. The chain crosses the membrane as a helical span at residues 53 to 73 (RDVGVIMTLPLFFPFLWFALW). At 74 to 77 (RKKR) the chain is on the cytoplasmic side. Residues 78–98 (GWFMYATALAIFGYWLWQFFL) traverse the membrane as a helical segment. Over 99–104 (RYQFCL) the chain is Periplasmic.

It localises to the cell inner membrane. The sequence is that of Inner membrane protein YjeO (yjeO) from Escherichia coli (strain K12).